The following is a 317-amino-acid chain: Protein lifeguard 2 (317 aa).

Positions 1 to 54 are disordered; sequence MTQGKLSVANKAPGTEGQQHQANGEKKDAPAVPSAPPSYEEATSGEGLKAGTFP. The next 3 membrane-spanning stretches (helical) occupy residues 107-127, 139-159, and 166-186; these read VYTILLVQLLVTLAVVALFTF, PGWYWASYAVFFATYLTLACC, and FPWNLILLTIFTLSMAYLTGM. A glycan (N-linked (GlcNAc...) asparagine) is linked at asparagine 192. 4 helical membrane passes run 195-215, 226-246, 252-272, and 291-311; these read SVLLCLVITALVCLSVTIFSF, GVLFVLLMTLFFSGLLLAVLL, PWLHAVYAVLGAGVFTLFLAF, and IFGALNIYLDIIYIFTFFLQL.

Belongs to the BI1 family. LFG subfamily. In terms of assembly, interacts with FAS/TNFRSF6 and BAX. As to expression, brain. Highly expressed in cerebellum, also found in cortex, olfactory bulb, and hippocampus.

It is found in the cell membrane. Its subcellular location is the membrane raft. The protein resides in the postsynaptic cell membrane. Antiapoptotic protein which protects cells uniquely from Fas-induced apoptosis. Regulates Fas-mediated apoptosis in neurons by interfering with caspase-8 activation. Plays a role in cerebellar development by affecting cerebellar size, internal granular layer (IGL) thickness, and Purkinje cell (PC) development. In Mus musculus (Mouse), this protein is Protein lifeguard 2 (Faim2).